A 2892-amino-acid chain; its full sequence is Inositol 1,4,5-trisphosphate receptor itr-1 (2892 aa).

Over 1-2475 (MNPSYGRVRK…YPLPEHSNSS (2475 aa)) the chain is Cytoplasmic. MIR domains lie at 192 to 246 (GNVI…IEPA), 319 to 379 (QNSV…VQVV), 386 to 466 (GGTA…LGPT), and 490 to 551 (NKEV…LLPV). 357-361 (RMTNR) serves as a coordination point for 1D-myo-inositol 1,4,5-trisphosphate. Residues 625 to 628 (KLLR) and 689 to 691 (YRK) each bind 1D-myo-inositol 1,4,5-trisphosphate. The interval 1030–1056 (MMRGGNKENSKDLAKTPSVTAEEAGRT) is disordered. The span at 1034–1043 (GNKENSKDLA) shows a compositional bias: basic and acidic residues. A helical membrane pass occupies residues 2476 to 2496 (ISLGNLYSWFAVFSSFLLAHY). The Extracellular portion of the chain corresponds to 2497–2514 (LRHDKIYLHKTSLLILAS). A helical transmembrane segment spans residues 2515–2535 (LCFLLLSSIGVTLTLYIFGIL). Residues 2536–2572 (QLVNKIVHVVAFVSNKGLEDRPIAEILACRNLHYLLV) lie on the Cytoplasmic side of the membrane. A helical membrane pass occupies residues 2573–2593 (YLFICILGLLVHPMIYCILLF). At 2594–2615 (DIIFTEETLQNVIASVTRNYQS) the chain is on the extracellular side. The helical transmembrane segment at 2616–2636 (IVWTGLLALILLYFFSILGFL) threads the bilayer. Over 2637-2735 (YFRHDFYLEV…FIWRVAYDMT (99 aa)) the chain is Cytoplasmic. Over residues 2655 to 2666 (ATISSGIPSETC) the composition is skewed to polar residues. The tract at residues 2655 to 2685 (ATISSGIPSETCPSEGCPGLQPSEKDDNDDE) is disordered. The helical transmembrane segment at 2736 to 2756 (FFVVLIVIVLNLIFGVIIDTF) threads the bilayer. Topologically, residues 2757–2892 (GDLRAEKNEK…RAFMEQFQPR (136 aa)) are extracellular.

This sequence belongs to the InsP3 receptor family. In terms of assembly, interacts with myo-1, myo-2, unc-54/myo-4 and nmy-2. Also interacts with iri-1. As to expression, isoform a is expressed in the anterior cells of the pharyngeal terminal bulb, vulva, rectal epithelial cells, spicule protractor muscles of the proctodeum and male-specific neuron CP8 or CP9. Isoform d is expressed in the spermatheca, excretory cell, amphid socket cells, PDA motor neuron, spicule retractor muscles, gubernaculum retractor muscles, posterior oblique muscles, diagonal muscles and the vas deferens. Also expressed in the intestine, pharynx, pharyngeal isthmus, pharyngeal intestinal valve, somatic gonad, hypodermal cells of the vulva, uterine sheath cells, tail, head, LUA motor neuron and the embryonic epidermis (at protein level).

The protein localises to the endoplasmic reticulum membrane. Functionally, receptor for inositol 1,4,5-trisphosphate, a second messenger that regulates intracellular calcium homeostasis. Binds in vitro to both inositol 1,4,5-trisphosphate (1,4,5-InsP3) and inositol 2,4,5-trisphosphate (2,4,5-InsP3) with high affinity and does not discriminate between the phosphate at 1 or 2 position. Can also bind inositol 1,3,4,5-tetrakisphosphate (1,3,4,5-InsP4) and inositol 4,5-bisphosphate (4,5-InsP2), but with lower affinity. Acts as a timekeeper/rhythm generator via calcium signaling, affecting the defecation cycle and pharyngeal pumping. Affects normal hermaphrodite and male fertility as a participant in intracellular signaling by acting downstream of let-23/lin-3 which regulates ovulation, spermathecal valve dilation and male mating behavior. Important for early embryonic development; controls epidermal cell migration and may also regulate filopodial protrusive activity during epithelial morphogenesis. Component of inositol trisphosphate (IP3)-mediated downstream signaling pathways that controls amphid sensory neuronal (ASH)-mediated response to nose touch and benzaldehyde but not other ASH-mediated responses. Involved in modulating lifespan, acting downstream of transcription factor atf-6. This chain is Inositol 1,4,5-trisphosphate receptor itr-1, found in Caenorhabditis elegans.